Consider the following 264-residue polypeptide: Hemin import ATP-binding protein HmuV (264 aa).

One can recognise an ABC transporter domain in the interval 10–246 (LQAQNLSYSI…HTLRKWYQAD (237 aa)). ATP is bound at residue 42-49 (GPNGAGKS).

This sequence belongs to the ABC transporter superfamily. Heme (hemin) importer (TC 3.A.1.14.5) family. In terms of assembly, the complex is composed of two ATP-binding proteins (HmuV), two transmembrane proteins (HmuU) and a solute-binding protein (HmuT).

It localises to the cell inner membrane. Part of the ABC transporter complex HmuTUV involved in hemin import. Responsible for energy coupling to the transport system. The sequence is that of Hemin import ATP-binding protein HmuV from Photorhabdus laumondii subsp. laumondii (strain DSM 15139 / CIP 105565 / TT01) (Photorhabdus luminescens subsp. laumondii).